The following is a 278-amino-acid chain: Digeranylgeranylglyceryl phosphate synthase (278 aa).

8 helical membrane passes run 12–32 (LKNCLTASFGAFIGGLIASYF), 34–54 (LAMVDNLILASIVVFLVCGFG), 92–112 (LVVMGLFISLFNISCFLMAVL), 129–149 (IIGNLIVAYLTGSVFIFGGIA), 153–173 (IDVTIMLFLCALFAMWSREII), 204–224 (FLLIFAIFLSPLPYLFGFFGI), 226–246 (YMISVVFCDLLFLFGIYKLVF), and 257–277 (SRNIKIVTNLVLIAFLIGSLF).

Belongs to the UbiA prenyltransferase family. DGGGP synthase subfamily. Mg(2+) is required as a cofactor.

The protein resides in the cell membrane. The enzyme catalyses sn-3-O-(geranylgeranyl)glycerol 1-phosphate + (2E,6E,10E)-geranylgeranyl diphosphate = 2,3-bis-O-(geranylgeranyl)-sn-glycerol 1-phosphate + diphosphate. It functions in the pathway membrane lipid metabolism; glycerophospholipid metabolism. Prenyltransferase that catalyzes the transfer of the geranylgeranyl moiety of geranylgeranyl diphosphate (GGPP) to the C2 hydroxyl of (S)-3-O-geranylgeranylglyceryl phosphate (GGGP). This reaction is the second ether-bond-formation step in the biosynthesis of archaeal membrane lipids. The chain is Digeranylgeranylglyceryl phosphate synthase from Methanococcus maripaludis (strain DSM 14266 / JCM 13030 / NBRC 101832 / S2 / LL).